The sequence spans 265 residues: Ubiquinone biosynthesis protein COQ4 homolog, mitochondrial (265 aa).

Zn(2+) contacts are provided by histidine 162, aspartate 163, histidine 166, and glutamate 178.

It belongs to the COQ4 family. In terms of assembly, component of a multi-subunit COQ enzyme complex. Requires Zn(2+) as cofactor.

The protein resides in the mitochondrion inner membrane. The catalysed reaction is a 4-hydroxy-3-methoxy-5-(all-trans-polyprenyl)benzoate + H(+) = a 2-methoxy-6-(all-trans-polyprenyl)phenol + CO2. The protein operates within cofactor biosynthesis; ubiquinone biosynthesis. Its function is as follows. Lyase that catalyzes the C1-decarboxylation of 4-hydroxy-3-methoxy-5-(all-trans-polyprenyl)benzoic acid into 2-methoxy-6-(all-trans-polyprenyl)phenol during ubiquinone biosynthesis. The chain is Ubiquinone biosynthesis protein COQ4 homolog, mitochondrial from Drosophila willistoni (Fruit fly).